The chain runs to 82 residues: Putative membrane protein insertion efficiency factor (82 aa).

It belongs to the UPF0161 family.

It localises to the cell membrane. Its function is as follows. Could be involved in insertion of integral membrane proteins into the membrane. The chain is Putative membrane protein insertion efficiency factor from Streptococcus thermophilus (strain ATCC BAA-491 / LMD-9).